The following is a 475-amino-acid chain: Gustatory and pheromone receptor 33a (475 aa).

Topologically, residues 1-34 (MIQIMNWFSMVIGLIPLNRQQSETNFILDYAMMC) are cytoplasmic. Residues 35 to 55 (IVPIFYVACYLLINLSHIIGL) form a helical membrane-spanning segment. The Extracellular segment spans residues 56-68 (CLLDSCNSVCKLS). The helical transmembrane segment at 69–89 (SHLFMHLGAFLYLTITLLSLY) threads the bilayer. Over 90–128 (RRKEFFQQFDARLNDIDAVIQKCQRVAEMDKVKVTAVKH) the chain is Cytoplasmic. The chain crosses the membrane as a helical span at residues 129–149 (SVAYHFTWLFLFCVFTFALYY). At 150–158 (DVRSLYLTF) the chain is on the extracellular side. Residues 159 to 179 (GNLAFIPFMVSSFPYLAGSII) form a helical membrane-spanning segment. The Cytoplasmic portion of the chain corresponds to 180 to 319 (QGEFIYHVSV…LALSVITNGE (140 aa)). The disordered stretch occupies residues 243–281 (TGFGNENKFAGEMKRQEGQQKNDDDDLDTSNDEDEDDFD). Over residues 251 to 264 (FAGEMKRQEGQQKN) the composition is skewed to basic and acidic residues. Over residues 265 to 281 (DDDDLDTSNDEDEDDFD) the composition is skewed to acidic residues. A helical membrane pass occupies residues 320–340 (FGPQCVPYMAACFVVSIFGIF). At 341–357 (LETKVNFIVGGKSRLLD) the chain is on the extracellular side. The chain crosses the membrane as a helical span at residues 358–378 (YMTYLYVIWSFTTMMVAYIVL). The Cytoplasmic segment spans residues 379–441 (RLCCNANNHS…FNGVGLFALD (63 aa)). The helical transmembrane segment at 442-462 (YTFIFSTVSAATSYLIVLLQF) threads the bilayer. The Extracellular segment spans residues 463 to 475 (DMTAILRNEGLMS).

Belongs to the insect chemoreceptor superfamily. Gustatory receptor (GR) family. Gr66a subfamily. As to expression, expressed widely in gustatory receptor neurons (GRNs) that respond to aversive chemicals. In larvae, is expressed in neurons of the terminal external chemosensory organ, and the dorsal, ventral and posterior external chemosensory organs.

It localises to the cell membrane. Gustatory receptor which mediates acceptance or avoidance behavior, depending on its substrates. Required for sensing all nonvolatile repulsive chemicals, including tastants, pheromones, and especially N,N-Diethyl-meta-toluamide (DEET), the most widely used insect repellent worldwide. Also functions as a pheromone receptor for a male inhibitory pheromone leading to male-male courtship suppression. The protein is Gustatory and pheromone receptor 33a (Gr33a) of Drosophila melanogaster (Fruit fly).